Reading from the N-terminus, the 154-residue chain is Myoglobin (154 aa).

The region spanning 2-148 is the Globin domain; that stretch reads GLSDGEWQLV…FRNDMAAKYK (147 aa). Serine 4 carries the post-translational modification Phosphoserine. Histidine 65 serves as a coordination point for nitrite. Histidine 65 provides a ligand contact to O2. Threonine 68 is modified (phosphothreonine). Histidine 94 is a binding site for heme b.

The protein belongs to the globin family. In terms of assembly, monomeric.

The protein resides in the cytoplasm. It localises to the sarcoplasm. It carries out the reaction Fe(III)-heme b-[protein] + nitric oxide + H2O = Fe(II)-heme b-[protein] + nitrite + 2 H(+). It catalyses the reaction H2O2 + AH2 = A + 2 H2O. In terms of biological role, monomeric heme protein which primary function is to store oxygen and facilitate its diffusion within muscle tissues. Reversibly binds oxygen through a pentacoordinated heme iron and enables its timely and efficient release as needed during periods of heightened demand. Depending on the oxidative conditions of tissues and cells, and in addition to its ability to bind oxygen, it also has a nitrite reductase activity whereby it regulates the production of bioactive nitric oxide. Under stress conditions, like hypoxia and anoxia, it also protects cells against reactive oxygen species thanks to its pseudoperoxidase activity. The sequence is that of Myoglobin (MB) from Sapajus apella (Brown-capped capuchin).